Consider the following 130-residue polypeptide: Protein ApaG (130 aa).

Residues 3 to 127 form the ApaG domain; sequence RAVTRNIEVQ…FSLDLPGTRR (125 aa).

The chain is Protein ApaG from Mesorhizobium japonicum (strain LMG 29417 / CECT 9101 / MAFF 303099) (Mesorhizobium loti (strain MAFF 303099)).